A 363-amino-acid polypeptide reads, in one-letter code: Chorismate synthase (363 aa).

NADP(+)-binding residues include Arg48 and Arg54. Residues 125 to 127 (RSS), 237 to 238 (NA), Gly277, 292 to 296 (KPTSS), and Arg318 each bind FMN.

This sequence belongs to the chorismate synthase family. In terms of assembly, homotetramer. FMNH2 serves as cofactor.

It carries out the reaction 5-O-(1-carboxyvinyl)-3-phosphoshikimate = chorismate + phosphate. Its pathway is metabolic intermediate biosynthesis; chorismate biosynthesis; chorismate from D-erythrose 4-phosphate and phosphoenolpyruvate: step 7/7. Catalyzes the anti-1,4-elimination of the C-3 phosphate and the C-6 proR hydrogen from 5-enolpyruvylshikimate-3-phosphate (EPSP) to yield chorismate, which is the branch point compound that serves as the starting substrate for the three terminal pathways of aromatic amino acid biosynthesis. This reaction introduces a second double bond into the aromatic ring system. The polypeptide is Chorismate synthase (Pseudomonas entomophila (strain L48)).